A 410-amino-acid chain; its full sequence is Peptidase T (410 aa).

Histidine 78 provides a ligand contact to Zn(2+). Residue aspartate 80 is part of the active site. Aspartate 140 is a Zn(2+) binding site. Residue glutamate 173 is the Proton acceptor of the active site. 3 residues coordinate Zn(2+): glutamate 174, aspartate 196, and histidine 379.

This sequence belongs to the peptidase M20B family. Zn(2+) is required as a cofactor.

Its subcellular location is the cytoplasm. The catalysed reaction is Release of the N-terminal residue from a tripeptide.. In terms of biological role, cleaves the N-terminal amino acid of tripeptides. The sequence is that of Peptidase T from Pectobacterium carotovorum subsp. carotovorum (strain PC1).